The sequence spans 275 residues: MNTKEIVNKYEFKFNKNLGQNFLVDESVLEDIIKGAEISKEDTVIEIGPGVGTLTKELLERAKEVYSIELDGDLIPILQEELKEYNNFTLIHKDALKIDFNGLMENKDSIKLVANLPYYVTTPIISRLLKEKCDFKSLTIMIQKEVAERIDAEPNCKEYGSLTVLVQYYCNTEIIRKVSPNCFIPRPKVDSIVIKLDRLSEPRVRVKSEKLFFNVVRSSFNMRRKTLWNSLKSLNIDKESMENAFERAGIDPKRRGETLSIEEFGKLSDCIYDIL.

S-adenosyl-L-methionine is bound by residues asparagine 21, leucine 23, glycine 48, glutamate 69, aspartate 94, and asparagine 115.

The protein belongs to the class I-like SAM-binding methyltransferase superfamily. rRNA adenine N(6)-methyltransferase family. RsmA subfamily.

It is found in the cytoplasm. It carries out the reaction adenosine(1518)/adenosine(1519) in 16S rRNA + 4 S-adenosyl-L-methionine = N(6)-dimethyladenosine(1518)/N(6)-dimethyladenosine(1519) in 16S rRNA + 4 S-adenosyl-L-homocysteine + 4 H(+). Its function is as follows. Specifically dimethylates two adjacent adenosines (A1518 and A1519) in the loop of a conserved hairpin near the 3'-end of 16S rRNA in the 30S particle. May play a critical role in biogenesis of 30S subunits. The protein is Ribosomal RNA small subunit methyltransferase A of Clostridium botulinum (strain Loch Maree / Type A3).